A 208-amino-acid polypeptide reads, in one-letter code: Large ribosomal subunit protein uL3 (208 aa).

The interval 123–147 (RHGQSRGPMAHGSRYHRRPGSMGPV) is disordered.

This sequence belongs to the universal ribosomal protein uL3 family. Part of the 50S ribosomal subunit. Forms a cluster with proteins L14 and L19.

One of the primary rRNA binding proteins, it binds directly near the 3'-end of the 23S rRNA, where it nucleates assembly of the 50S subunit. The polypeptide is Large ribosomal subunit protein uL3 (Streptococcus sanguinis (strain SK36)).